Consider the following 419-residue polypeptide: Phospho-N-acetylmuramoyl-pentapeptide-transferase (419 aa).

A run of 10 helical transmembrane segments spans residues 22 to 42 (YVSF…TVIG), 72 to 92 (TPTM…LLLA), 99 to 119 (ILLM…DDYI), 135 to 155 (IIGQ…NPAV), 208 to 228 (VLFG…FISN), 238 to 258 (GLAT…AYVS), 278 to 298 (LTIF…YNAY), 303 to 323 (FMGD…ALII), 328 to 348 (LLPI…IQVF), and 396 to 416 (KITV…IATL).

This sequence belongs to the glycosyltransferase 4 family. MraY subfamily. It depends on Mg(2+) as a cofactor.

Its subcellular location is the cell inner membrane. It catalyses the reaction UDP-N-acetyl-alpha-D-muramoyl-L-alanyl-gamma-D-glutamyl-meso-2,6-diaminopimeloyl-D-alanyl-D-alanine + di-trans,octa-cis-undecaprenyl phosphate = di-trans,octa-cis-undecaprenyl diphospho-N-acetyl-alpha-D-muramoyl-L-alanyl-D-glutamyl-meso-2,6-diaminopimeloyl-D-alanyl-D-alanine + UMP. It participates in cell wall biogenesis; peptidoglycan biosynthesis. Its function is as follows. Catalyzes the initial step of the lipid cycle reactions in the biosynthesis of the cell wall peptidoglycan: transfers peptidoglycan precursor phospho-MurNAc-pentapeptide from UDP-MurNAc-pentapeptide onto the lipid carrier undecaprenyl phosphate, yielding undecaprenyl-pyrophosphoryl-MurNAc-pentapeptide, known as lipid I. This chain is Phospho-N-acetylmuramoyl-pentapeptide-transferase, found in Porphyromonas gingivalis (strain ATCC 33277 / DSM 20709 / CIP 103683 / JCM 12257 / NCTC 11834 / 2561).